The sequence spans 379 residues: UDP-N-acetylglucosamine--N-acetylmuramyl-(pentapeptide) pyrophosphoryl-undecaprenol N-acetylglucosamine transferase (379 aa).

UDP-N-acetyl-alpha-D-glucosamine is bound by residues 17-19 (TGG), N128, R169, S197, and Q298.

Belongs to the glycosyltransferase 28 family. MurG subfamily.

Its subcellular location is the cell inner membrane. The enzyme catalyses di-trans,octa-cis-undecaprenyl diphospho-N-acetyl-alpha-D-muramoyl-L-alanyl-D-glutamyl-meso-2,6-diaminopimeloyl-D-alanyl-D-alanine + UDP-N-acetyl-alpha-D-glucosamine = di-trans,octa-cis-undecaprenyl diphospho-[N-acetyl-alpha-D-glucosaminyl-(1-&gt;4)]-N-acetyl-alpha-D-muramoyl-L-alanyl-D-glutamyl-meso-2,6-diaminopimeloyl-D-alanyl-D-alanine + UDP + H(+). It functions in the pathway cell wall biogenesis; peptidoglycan biosynthesis. Its function is as follows. Cell wall formation. Catalyzes the transfer of a GlcNAc subunit on undecaprenyl-pyrophosphoryl-MurNAc-pentapeptide (lipid intermediate I) to form undecaprenyl-pyrophosphoryl-MurNAc-(pentapeptide)GlcNAc (lipid intermediate II). This chain is UDP-N-acetylglucosamine--N-acetylmuramyl-(pentapeptide) pyrophosphoryl-undecaprenol N-acetylglucosamine transferase, found in Brucella canis (strain ATCC 23365 / NCTC 10854 / RM-666).